Here is a 144-residue protein sequence, read N- to C-terminus: Conopressin-conophysin (144 aa).

The first 27 residues, 1 to 27 (MTRSALQMGRLTLVLCLLLQLVLVTQA), serve as a signal peptide directing secretion. Cys28 and Cys33 form a disulfide bridge. At Asp36 the chain carries Aspartic acid 1-amide. A propeptide spanning residues 37–44 (GERDVDGR) is cleaved from the precursor. Cystine bridges form between Cys50/Cys90, Cys53/Cys64, Cys58/Cys80, Cys65/Cys70, Cys97/Cys117, Cys109/Cys129, and Cys118/Cys123. The propeptide occupies 131-144 (KESKSGIRVGCQRS).

Belongs to the vasopressin/oxytocin family. In terms of tissue distribution, expressed by the venom duct.

The protein localises to the secreted. The sequence is that of Conopressin-conophysin from Conus bayani (Bayan's cone).